Consider the following 398-residue polypeptide: 1-deoxy-D-xylulose 5-phosphate reductoisomerase (398 aa).

NADPH-binding residues include Thr11, Gly12, Ser13, Ile14, Arg38, Asn39, and Asn125. Lys126 lines the 1-deoxy-D-xylulose 5-phosphate pocket. Glu127 lines the NADPH pocket. Asp151 provides a ligand contact to Mn(2+). 1-deoxy-D-xylulose 5-phosphate contacts are provided by Ser152, Glu153, Ser179, and His202. Residue Glu153 coordinates Mn(2+). Gly208 serves as a coordination point for NADPH. Positions 215, 220, 221, and 224 each coordinate 1-deoxy-D-xylulose 5-phosphate. Glu224 contacts Mn(2+).

The protein belongs to the DXR family. The cofactor is Mg(2+). Mn(2+) serves as cofactor.

It carries out the reaction 2-C-methyl-D-erythritol 4-phosphate + NADP(+) = 1-deoxy-D-xylulose 5-phosphate + NADPH + H(+). Its pathway is isoprenoid biosynthesis; isopentenyl diphosphate biosynthesis via DXP pathway; isopentenyl diphosphate from 1-deoxy-D-xylulose 5-phosphate: step 1/6. Functionally, catalyzes the NADPH-dependent rearrangement and reduction of 1-deoxy-D-xylulose-5-phosphate (DXP) to 2-C-methyl-D-erythritol 4-phosphate (MEP). The chain is 1-deoxy-D-xylulose 5-phosphate reductoisomerase from Burkholderia multivorans (strain ATCC 17616 / 249).